A 318-amino-acid chain; its full sequence is Methionyl-tRNA formyltransferase (318 aa).

A (6S)-5,6,7,8-tetrahydrofolate-binding site is contributed by 112–115 (SILP).

The protein belongs to the Fmt family.

The catalysed reaction is L-methionyl-tRNA(fMet) + (6R)-10-formyltetrahydrofolate = N-formyl-L-methionyl-tRNA(fMet) + (6S)-5,6,7,8-tetrahydrofolate + H(+). Its function is as follows. Attaches a formyl group to the free amino group of methionyl-tRNA(fMet). The formyl group appears to play a dual role in the initiator identity of N-formylmethionyl-tRNA by promoting its recognition by IF2 and preventing the misappropriation of this tRNA by the elongation apparatus. This is Methionyl-tRNA formyltransferase from Shewanella putrefaciens (strain CN-32 / ATCC BAA-453).